The chain runs to 372 residues: Glutamate 5-kinase (372 aa).

Residue Lys14 participates in ATP binding. The substrate site is built by Ser54, Asp141, and Asn153. 173 to 174 (TD) is a binding site for ATP. The PUA domain maps to 280–358 (RGHVVIDDGA…GEIESVLGYM (79 aa)).

It belongs to the glutamate 5-kinase family.

The protein localises to the cytoplasm. The enzyme catalyses L-glutamate + ATP = L-glutamyl 5-phosphate + ADP. It participates in amino-acid biosynthesis; L-proline biosynthesis; L-glutamate 5-semialdehyde from L-glutamate: step 1/2. Catalyzes the transfer of a phosphate group to glutamate to form L-glutamate 5-phosphate. The sequence is that of Glutamate 5-kinase from Paraburkholderia phymatum (strain DSM 17167 / CIP 108236 / LMG 21445 / STM815) (Burkholderia phymatum).